We begin with the raw amino-acid sequence, 397 residues long: UDP-galactose translocator (397 aa).

A disordered region spans residues 1-21 (MAAVGSGGSNAAAGPGAVSAG). Transmembrane regions (helical) follow at residues 3 to 23 (AVGS…AGSL), 37 to 57 (YISL…IRYA), 65 to 85 (FFAT…CLLL), 97 to 117 (LALF…KLAV), 140 to 160 (TFQV…VLML), 169 to 189 (WASL…QAGG), 200 to 220 (GAGL…GVYF), 238 to 258 (LGLF…GTAV), 269 to 289 (PAVW…AVVV), and 315 to 335 (LFGF…IGAV). Residues 9–21 (SNAAAGPGAVSAG) are compositionally biased toward low complexity. Positions 355-397 (ASASTSGPCTHQQPPGQPPPPKLSSHRADLSTEPFLPKSVLVK) are disordered.

Belongs to the nucleotide-sugar transporter family. SLC35A subfamily. Interacts with SLC35A3; the interaction is reduced in the presence of SLC35A4. Found in a complex with SLC35A3 and SLC35A4.

The protein localises to the golgi apparatus membrane. The catalysed reaction is UMP(out) + UDP-alpha-D-galactose(in) = UMP(in) + UDP-alpha-D-galactose(out). It carries out the reaction UDP-N-acetyl-alpha-D-galactosamine(in) + UMP(out) = UDP-N-acetyl-alpha-D-galactosamine(out) + UMP(in). The enzyme catalyses UMP(out) + UDP-alpha-D-glucose(in) = UMP(in) + UDP-alpha-D-glucose(out). It catalyses the reaction UMP(out) + UDP-N-acetyl-alpha-D-glucosamine(in) = UMP(in) + UDP-N-acetyl-alpha-D-glucosamine(out). The catalysed reaction is UDP-alpha-D-galactose(in) + AMP(out) = UDP-alpha-D-galactose(out) + AMP(in). It carries out the reaction UDP-alpha-D-galactose(in) + CMP(out) = UDP-alpha-D-galactose(out) + CMP(in). The enzyme catalyses UDP-N-acetyl-alpha-D-galactosamine(out) + UDP-alpha-D-galactose(in) = UDP-N-acetyl-alpha-D-galactosamine(in) + UDP-alpha-D-galactose(out). It catalyses the reaction UDP-N-acetyl-alpha-D-glucosamine(out) + UDP-alpha-D-galactose(in) = UDP-N-acetyl-alpha-D-glucosamine(in) + UDP-alpha-D-galactose(out). The catalysed reaction is UDP-alpha-D-galactose(in) + UDP-alpha-D-glucose(out) = UDP-alpha-D-galactose(out) + UDP-alpha-D-glucose(in). It carries out the reaction UMP(out) + CMP(in) = UMP(in) + CMP(out). The enzyme catalyses UMP(out) + AMP(in) = UMP(in) + AMP(out). Transports uridine diphosphate galactose (UDP-galactose) from the cytosol into the Golgi apparatus, functioning as an antiporter that exchanges UDP-galactose for UMP. It is also able to exchange UDP-galactose for AMP and CMP, and to transport UDP-N-acetylgalactosamine (UDP-GalNAc) and other nucleotide sugars. As a provider of UDP-galactose to galactosyltransferases present in the Golgi apparatus, it is necessary for globotriaosylceramide/globoside (Gb3Cer) synthesis from lactosylceramide. This Canis lupus familiaris (Dog) protein is UDP-galactose translocator.